A 563-amino-acid polypeptide reads, in one-letter code: Serine/threonine-protein kinase WNK8 (563 aa).

The Protein kinase domain maps to 29–286; the sequence is IRYDDVLGRG…ALELSKDPFL (258 aa). ATP contacts are provided by residues 109-112 and K159; that span reads TELF. D176 (proton acceptor) is an active-site residue. Residues 426-436 are compositionally biased toward polar residues; it reads TSSHHNQNSPR. The segment at 426 to 459 is disordered; the sequence is TSSHHNQNSPRLTHEDHEAANQQTVNSKDEEAAG. S509 is modified (phosphoserine).

Belongs to the protein kinase superfamily. Ser/Thr protein kinase family. WNK subfamily. As to quaternary structure, interacts with RGS1 and GB1, but not with GPA1. The association with RGS1 at the plasma membrane is triggered by induction of glucose. Binds to EDM2 in nucleus. Autophosphorylated.

The protein localises to the nucleus. The catalysed reaction is L-seryl-[protein] + ATP = O-phospho-L-seryl-[protein] + ADP + H(+). It carries out the reaction L-threonyl-[protein] + ATP = O-phospho-L-threonyl-[protein] + ADP + H(+). Functionally, regulates flowering time by modulating the photoperiod pathway. Phosphorylates the vacuolar ATPase subunit C (VATC) and RGS1. Regulates EDM2 that, in turn, modulates development processes. This chain is Serine/threonine-protein kinase WNK8 (WNK8), found in Arabidopsis thaliana (Mouse-ear cress).